The sequence spans 694 residues: Transcription activator of gluconeogenesis PTRG_06536 (694 aa).

Residues 1-57 are disordered; it reads MTTPDAEDASPSPEYRSDQDDDMAAEQTTDRQSGDASPTQKPANGKPNAKDPLRPRR. The segment at residues 64–92 is a DNA-binding region (zn(2)-C6 fungal-type); it reads CFACQRAHLTCGDERPCGRCIKRGLQDHC. Disordered regions lie at residues 175-216, 289-369, 384-420, and 539-569; these read FSNQ…FGPL, AMAF…GDNP, AQRS…RDTK, and VNLG…SEGA. Polar residues predominate over residues 193-204; sequence SVQNAGAPSTMS. A compositionally biased stretch (low complexity) spans 205–214; it reads QGQQGMQQFG. Residues 302 to 324 are compositionally biased toward polar residues; that stretch reads WQETQSRQGSMHVHTPNNTSGSG. The span at 349–363 shows a compositional bias: low complexity; it reads ATHSTASPASTDAST. Polar residues predominate over residues 392–408; the sequence is RPQQENRPPTTALQSIH. The region spanning 485-559 is the PAS domain; it reads LQRHLMTLQE…SDTSTQNTTP (75 aa).

It belongs to the ERT1/acuK family.

Its subcellular location is the nucleus. Its function is as follows. Transcription factor which regulates nonfermentable carbon utilization. Activator of gluconeogenetic genes. This is Transcription activator of gluconeogenesis PTRG_06536 from Pyrenophora tritici-repentis (strain Pt-1C-BFP) (Wheat tan spot fungus).